A 132-amino-acid polypeptide reads, in one-letter code: Large ribosomal subunit protein uL14 (132 aa).

It belongs to the universal ribosomal protein uL14 family. In terms of assembly, part of the 50S ribosomal subunit. Forms a cluster with proteins L3 and L24e, part of which may contact the 16S rRNA in 2 intersubunit bridges.

Its function is as follows. Binds to 23S rRNA. Forms part of two intersubunit bridges in the 70S ribosome. This Methanosphaera stadtmanae (strain ATCC 43021 / DSM 3091 / JCM 11832 / MCB-3) protein is Large ribosomal subunit protein uL14.